A 264-amino-acid chain; its full sequence is MKAYLDLLSHVLNNGTDRSDRTGVGTRSVFGYQMRFNLQEGFPLLTTKKLHLRSIIYELLWFLKGDTNIAWLKEHGVSIWDEWADKDGNLGPVYGYQWRSWPSSDGRYIDQISNLLAMINHNPNSRRLIVTAWNPALIDEMALPPCHCLFQFQVANGKLSCQLYQRSADIFLGVPFNIASYALLTMMIAQVTGLKVGDFIHTLGDAHLYSNHFEQAKQQLSRTPGILPLIRINPKVTDLFSFQFEDFELLNYEAQPHIKAPVAV.

Arg21 is a dUMP binding site. Residue His51 coordinates (6R)-5,10-methylene-5,6,7,8-tetrahydrofolate. 126–127 (RR) is a binding site for dUMP. The Nucleophile role is filled by Cys146. Residues 166–169 (RSAD), Asn177, and 207–209 (HLY) contribute to the dUMP site. Asp169 is a (6R)-5,10-methylene-5,6,7,8-tetrahydrofolate binding site. Ala263 serves as a coordination point for (6R)-5,10-methylene-5,6,7,8-tetrahydrofolate.

Belongs to the thymidylate synthase family. Bacterial-type ThyA subfamily. In terms of assembly, homodimer.

It localises to the cytoplasm. The catalysed reaction is dUMP + (6R)-5,10-methylene-5,6,7,8-tetrahydrofolate = 7,8-dihydrofolate + dTMP. The protein operates within pyrimidine metabolism; dTTP biosynthesis. In terms of biological role, catalyzes the reductive methylation of 2'-deoxyuridine-5'-monophosphate (dUMP) to 2'-deoxythymidine-5'-monophosphate (dTMP) while utilizing 5,10-methylenetetrahydrofolate (mTHF) as the methyl donor and reductant in the reaction, yielding dihydrofolate (DHF) as a by-product. This enzymatic reaction provides an intracellular de novo source of dTMP, an essential precursor for DNA biosynthesis. This Bartonella bacilliformis (strain ATCC 35685 / KC583 / Herrer 020/F12,63) protein is Thymidylate synthase.